A 425-amino-acid chain; its full sequence is Orexin/Hypocretin receptor type 1 (425 aa).

Positions 1–24 (MEPSATPGAQMGVPPGSREPSPVP) are disordered. At 1-46 (MEPSATPGAQMGVPPGSREPSPVPPDYEDEFLRYLWRDYLYPKQYE) the chain is on the extracellular side. Residues 26-41 (DYEDEFLRYLWRDYLY) form a required for response to orexin-A region. Residues 47–67 (WVLIAAYVAVFVVALVGNTLV) traverse the membrane as a helical segment. Residues 68-82 (CLAVWRNHHMRTVTN) lie on the Cytoplasmic side of the membrane. A helical membrane pass occupies residues 83 to 105 (YFIVNLSLADVLVTAICLPASLL). Residues 106–119 (VDITESWLFGHALC) lie on the Extracellular side of the membrane. The cysteines at positions 119 and 202 are disulfide-linked. Residues 120-140 (KVIPYLQAVSVSVAVLTLSFI) form a helical membrane-spanning segment. The Cytoplasmic portion of the chain corresponds to 141-160 (ALDRWYAICHPLLFKSTARR). Residues 161–182 (ARGSILGIWAVSLAIMVPQAAV) form a helical membrane-spanning segment. Topologically, residues 183–213 (MECSSVLPELANRTRLFSVCDERWADDLYPK) are extracellular. Residue asparagine 194 is glycosylated (N-linked (GlcNAc...) asparagine). Residues 214 to 235 (IYHSCFFIVTYLAPLGLMAMAY) form a helical membrane-spanning segment. Topologically, residues 236–298 (FQIFRKLWGR…QMRARRKTAK (63 aa)) are cytoplasmic. The chain crosses the membrane as a helical span at residues 299 to 321 (MLMVVLLVFALCYLPISVLNVLK). Asparagine 318 serves as a coordination point for suvorexant. Residues 322 to 336 (RVFGMFRQASDREAV) lie on the Extracellular side of the membrane. The helical transmembrane segment at 337-360 (YACFTFSHWLVYANSAANPIIYNF) threads the bilayer. Residues 361 to 425 (LSGKFREQFK…VLTSVTTVLP (65 aa)) are Cytoplasmic-facing.

The protein belongs to the G-protein coupled receptor 1 family.

Its subcellular location is the cell membrane. Moderately selective excitatory receptor for orexin-A and, with a lower affinity, for orexin-B neuropeptide. Triggers an increase in cytoplasmic Ca(2+) levels in response to orexin-A binding. This is Orexin/Hypocretin receptor type 1 from Homo sapiens (Human).